The sequence spans 444 residues: Phosphoglucosamine mutase (444 aa).

The Phosphoserine intermediate role is filled by S100. 4 residues coordinate Mg(2+): S100, D240, D242, and D244. S100 is subject to Phosphoserine.

Belongs to the phosphohexose mutase family. Mg(2+) is required as a cofactor. Post-translationally, activated by phosphorylation.

The enzyme catalyses alpha-D-glucosamine 1-phosphate = D-glucosamine 6-phosphate. In terms of biological role, catalyzes the conversion of glucosamine-6-phosphate to glucosamine-1-phosphate. The chain is Phosphoglucosamine mutase from Moorella thermoacetica (strain ATCC 39073 / JCM 9320).